The sequence spans 362 residues: ATPase ARSA2 (362 aa).

An ATP-binding site is contributed by 27-34 (KGGVGKTT). Asp58 is an active-site residue. Glu235 and Asn262 together coordinate ATP.

The protein belongs to the arsA ATPase family. In terms of assembly, homodimer. Interacts with SEC61B.

It localises to the cytoplasm. The protein resides in the cytosol. The protein localises to the endoplasmic reticulum. Its function is as follows. ATPase required for the post-translational delivery of tail-anchored (TA) proteins to the endoplasmic reticulum. Recognizes and selectively binds the transmembrane domain of TA proteins in the cytosol. This complex then targets to the endoplasmic reticulum by membrane-bound receptors, where the tail-anchored protein is released for insertion. This process is regulated by ATP binding and hydrolysis. ATP binding drives the homodimer towards the closed dimer state, facilitating recognition of newly synthesized TA membrane proteins. ATP hydrolysis is required for insertion. Subsequently, the homodimer reverts towards the open dimer state, lowering its affinity for the membrane-bound receptor, and returning it to the cytosol to initiate a new round of targeting. This is ATPase ARSA2 from Chlamydomonas reinhardtii (Chlamydomonas smithii).